Reading from the N-terminus, the 122-residue chain is Large ribosomal subunit protein uL14 (122 aa).

Belongs to the universal ribosomal protein uL14 family. Part of the 50S ribosomal subunit. Forms a cluster with proteins L3 and L19. In the 70S ribosome, L14 and L19 interact and together make contacts with the 16S rRNA in bridges B5 and B8.

Binds to 23S rRNA. Forms part of two intersubunit bridges in the 70S ribosome. This chain is Large ribosomal subunit protein uL14, found in Cellvibrio japonicus (strain Ueda107) (Pseudomonas fluorescens subsp. cellulosa).